The chain runs to 225 residues: Uracil-DNA glycosylase (225 aa).

The Proton acceptor role is filled by Asp-68.

It belongs to the uracil-DNA glycosylase (UDG) superfamily. UNG family.

It localises to the cytoplasm. It carries out the reaction Hydrolyzes single-stranded DNA or mismatched double-stranded DNA and polynucleotides, releasing free uracil.. Functionally, excises uracil residues from the DNA which can arise as a result of misincorporation of dUMP residues by DNA polymerase or due to deamination of cytosine. The sequence is that of Uracil-DNA glycosylase from Parafrankia sp. (strain EAN1pec).